The sequence spans 421 residues: Histidine--tRNA ligase (421 aa).

The protein belongs to the class-II aminoacyl-tRNA synthetase family. In terms of assembly, homodimer.

The protein localises to the cytoplasm. It catalyses the reaction tRNA(His) + L-histidine + ATP = L-histidyl-tRNA(His) + AMP + diphosphate + H(+). The sequence is that of Histidine--tRNA ligase from Coxiella burnetii (strain CbuK_Q154) (Coxiella burnetii (strain Q154)).